The sequence spans 241 residues: Ubiquinone biosynthesis O-methyltransferase (241 aa).

S-adenosyl-L-methionine is bound by residues arginine 46, glycine 66, aspartate 87, and methionine 131.

The protein belongs to the methyltransferase superfamily. UbiG/COQ3 family.

It carries out the reaction a 3-demethylubiquinol + S-adenosyl-L-methionine = a ubiquinol + S-adenosyl-L-homocysteine + H(+). The enzyme catalyses a 3-(all-trans-polyprenyl)benzene-1,2-diol + S-adenosyl-L-methionine = a 2-methoxy-6-(all-trans-polyprenyl)phenol + S-adenosyl-L-homocysteine + H(+). Its pathway is cofactor biosynthesis; ubiquinone biosynthesis. O-methyltransferase that catalyzes the 2 O-methylation steps in the ubiquinone biosynthetic pathway. The sequence is that of Ubiquinone biosynthesis O-methyltransferase from Bordetella pertussis (strain Tohama I / ATCC BAA-589 / NCTC 13251).